The chain runs to 303 residues: HTH-type transcriptional regulator LinR (303 aa).

The 58-residue stretch at 6–63 (LDFRHLVLLDALLKRHSVSAAARELDLPQPTASHGLARLRKALGDPLLVRARDGMEPT) folds into the HTH lysR-type domain. Residues 23 to 42 (VSAAARELDLPQPTASHGLA) constitute a DNA-binding region (H-T-H motif).

Belongs to the LysR transcriptional regulatory family.

In terms of biological role, positively regulates the transcription of the linD and linE genes that are involved in gamma-hexachlorocyclohexane (gamma-HCH or lindane) degradation. This degradation pathway allows S.japonicum UT26 to grow on gamma-HCH as the sole source of carbon and energy. The chain is HTH-type transcriptional regulator LinR (linR) from Sphingobium indicum (strain DSM 16413 / CCM 7287 / MTCC 6362 / UT26 / NBRC 101211 / UT26S) (Sphingobium japonicum).